A 1030-amino-acid chain; its full sequence is Germ cell nuclear acidic protein (1030 aa).

Disordered stretches follow at residues 1-59, 196-245, 266-361, 375-433, 457-594, and 699-764; these read MADH…TEDT, EWNG…TQLA, KRLA…VSSI, TMES…EQFL, LKRS…DLTY, and KLGI…PVAS. Positions 20–33 are enriched in basic and acidic residues; it reads APKDHPEKRNDQKT. Composition is skewed to polar residues over residues 298-316 and 329-349; these read EPNT…TIHN and ETSS…STSG. Over residues 505–516 the composition is skewed to polar residues; that stretch reads LRTNQTPLNSTR. 2 stretches are compositionally biased toward basic and acidic residues: residues 541-553 and 578-594; these read NHID…KLID and DSDK…DLTY. Residues 720–748 show a composition bias toward low complexity; sequence TPKTAPPKGTAPPKTSAPPKVSTPPKSTK.

The protein belongs to the serine-aspartate repeat-containing protein (SDr) family.

Its subcellular location is the cytoplasm. It is found in the chromosome. May play a role in DNA-protein cross-links (DPCs) clearance, ensuring the genomic stability by protecting germ cells and early embryos from various sources of damage. Limits replication stress and DNA double-strand breaks. This Drosophila melanogaster (Fruit fly) protein is Germ cell nuclear acidic protein.